Reading from the N-terminus, the 468-residue chain is Ubiquinone biosynthesis monooxygenase COQ6, mitochondrial (468 aa).

The transit peptide at 1–28 (MAARLVSRCGAVRAAPHSGPLVSWRRWS) directs the protein to the mitochondrion.

Belongs to the UbiH/COQ6 family. In terms of assembly, component of a multi-subunit COQ enzyme complex, composed of at least COQ3, COQ4, COQ5, COQ6, COQ7 and COQ9. Interacts with COQ8B and COQ7. It depends on FAD as a cofactor. In terms of tissue distribution, widely expressed.

It localises to the mitochondrion inner membrane. The protein resides in the golgi apparatus. Its subcellular location is the cell projection. It carries out the reaction 4-hydroxy-3-(all-trans-decaprenyl)benzoate + 2 reduced [2Fe-2S]-[ferredoxin] + O2 + 2 H(+) = 3,4-dihydroxy-5-(all-trans-decaprenyl)benzoate + 2 oxidized [2Fe-2S]-[ferredoxin] + H2O. It catalyses the reaction 2-methoxy-6-(all-trans-decaprenyl)phenol + 2 reduced [2Fe-2S]-[ferredoxin] + O2 + 2 H(+) = 2-methoxy-6-(all-trans-decaprenyl)benzene-1,4-diol + 2 oxidized [2Fe-2S]-[ferredoxin] + H2O. The protein operates within cofactor biosynthesis; ubiquinone biosynthesis. Functionally, FAD-dependent monooxygenase required for two non-consecutive steps during ubiquinone biosynthesis. Required for the C5-ring hydroxylation during ubiquinone biosynthesis by catalyzing the hydroxylation of 4-hydroxy-3-(all-trans-decaprenyl)benzoic acid to 3,4-dihydroxy-5-(all-trans-decaprenyl)benzoic acid. Also acts downstream of COQ4, for the C1-hydroxylation during ubiquinone biosynthesis by catalyzing the hydroxylation of 2-methoxy-6-(all-trans-decaprenyl)phenol to 2-methoxy-6-(all-trans-decaprenyl)benzene-1,4-diol. The electrons required for the hydroxylation reaction are funneled indirectly to COQ6 from NADPH via a ferredoxin/ferredoxin reductase system composed of FDX2 and FDXR. The chain is Ubiquinone biosynthesis monooxygenase COQ6, mitochondrial from Homo sapiens (Human).